We begin with the raw amino-acid sequence, 106 residues long: Large ribosomal subunit protein uL24 (106 aa).

The protein belongs to the universal ribosomal protein uL24 family. In terms of assembly, part of the 50S ribosomal subunit.

Its function is as follows. One of two assembly initiator proteins, it binds directly to the 5'-end of the 23S rRNA, where it nucleates assembly of the 50S subunit. Functionally, one of the proteins that surrounds the polypeptide exit tunnel on the outside of the subunit. The polypeptide is Large ribosomal subunit protein uL24 (Rhodospirillum rubrum (strain ATCC 11170 / ATH 1.1.1 / DSM 467 / LMG 4362 / NCIMB 8255 / S1)).